We begin with the raw amino-acid sequence, 433 residues long: 23S rRNA (uracil(1939)-C(5))-methyltransferase RlmD (433 aa).

Residues 10–68 (RTTTRQIITVSVNDLDSFGQGVARHNGKTLFIPGLLPQENAEVTVTEDKKQYARAKVVR) form the TRAM domain. [4Fe-4S] cluster-binding residues include cysteine 81, cysteine 87, cysteine 90, and cysteine 162. S-adenosyl-L-methionine contacts are provided by glutamine 265, phenylalanine 294, asparagine 299, glutamate 315, asparagine 342, and aspartate 363. Catalysis depends on cysteine 389, which acts as the Nucleophile.

The protein belongs to the class I-like SAM-binding methyltransferase superfamily. RNA M5U methyltransferase family. RlmD subfamily.

The enzyme catalyses uridine(1939) in 23S rRNA + S-adenosyl-L-methionine = 5-methyluridine(1939) in 23S rRNA + S-adenosyl-L-homocysteine + H(+). Functionally, catalyzes the formation of 5-methyl-uridine at position 1939 (m5U1939) in 23S rRNA. In Shigella boydii serotype 4 (strain Sb227), this protein is 23S rRNA (uracil(1939)-C(5))-methyltransferase RlmD.